We begin with the raw amino-acid sequence, 101 residues long: Small ribosomal subunit protein uS14 (101 aa).

Belongs to the universal ribosomal protein uS14 family. Part of the 30S ribosomal subunit. Contacts proteins S3 and S10.

In terms of biological role, binds 16S rRNA, required for the assembly of 30S particles and may also be responsible for determining the conformation of the 16S rRNA at the A site. In Shewanella sediminis (strain HAW-EB3), this protein is Small ribosomal subunit protein uS14.